The chain runs to 235 residues: Golgi to ER traffic protein 1 (235 aa).

A topological domain (lumenal) is located at residue methionine 1. The chain crosses the membrane as a helical span at residues 2-21 (HWAAAVAIFFIVVTKFLQYT). The Cytoplasmic segment spans residues 22–104 (NKYHEKWISK…AFQAHLHKLR (83 aa)). Positions 68-104 (WTKNNRKLDSLDKEINNLKDEIQSENKAFQAHLHKLR) form a coiled coil. Residues 105 to 125 (LLALTVPFFVFKIMYGKTPVY) form a helical membrane-spanning segment. Residues 126 to 181 (KLSSSTSTLFPTFVSGVWSQGWLYVLLHPLRTISQKWHIMEGKFGASKFDDMALQS) are Lumenal-facing. A helical transmembrane segment spans residues 182–198 (VSLGIWVWALMNVINGV). At 199 to 235 (EFIVKQLFLTPKMEAPASVETQEEKALDAVDDAIILD) the chain is on the cytoplasmic side.

This sequence belongs to the WRB/GET1 family. As to quaternary structure, component of the Golgi to ER traffic (GET) complex, which is composed of GET1, GET2 and GET3. Within the complex, GET1 and GET2 form a heterotetramer which is stabilized by phosphatidylinositol binding and which binds to the GET3 homodimer.

The protein resides in the endoplasmic reticulum membrane. It localises to the golgi apparatus membrane. Its function is as follows. Required for the post-translational delivery of tail-anchored (TA) proteins to the endoplasmic reticulum. Together with GET2, acts as a membrane receptor for soluble GET3, which recognizes and selectively binds the transmembrane domain of TA proteins in the cytosol. The GET complex cooperates with the HDEL receptor ERD2 to mediate the ATP-dependent retrieval of resident ER proteins that contain a C-terminal H-D-E-L retention signal from the Golgi to the ER. The polypeptide is Golgi to ER traffic protein 1 (Saccharomyces cerevisiae (strain RM11-1a) (Baker's yeast)).